The following is a 275-amino-acid chain: Large ribosomal subunit protein uL2 (275 aa).

Residues 208–275 (AGAKRWRGRR…NMIIRDRRKK (68 aa)) form a disordered region. 2 stretches are compositionally biased toward basic residues: residues 209 to 219 (GAKRWRGRRPT) and 254 to 263 (KGYKTRRNKR).

It belongs to the universal ribosomal protein uL2 family. Part of the 50S ribosomal subunit. Forms a bridge to the 30S subunit in the 70S ribosome.

In terms of biological role, one of the primary rRNA binding proteins. Required for association of the 30S and 50S subunits to form the 70S ribosome, for tRNA binding and peptide bond formation. It has been suggested to have peptidyltransferase activity; this is somewhat controversial. Makes several contacts with the 16S rRNA in the 70S ribosome. The polypeptide is Large ribosomal subunit protein uL2 (Coxiella burnetii (strain CbuG_Q212) (Coxiella burnetii (strain Q212))).